A 214-amino-acid polypeptide reads, in one-letter code: Cytochrome b (214 aa).

4 helical membrane passes run 31–51 (FGSM…FLAI), 75–96 (WIMQ…YIHI), 111–131 (WLSG…GYVL), and 176–196 (FFAL…IHIL). 2 residues coordinate heme b: histidine 81 and histidine 95. Residues histidine 180 and histidine 194 each coordinate heme b. Histidine 199 provides a ligand contact to a ubiquinone.

It belongs to the cytochrome b family. As to quaternary structure, the cytochrome bc1 complex contains 3 respiratory subunits (MT-CYB, CYC1 and UQCRFS1), 2 core proteins (UQCRC1 and UQCRC2) and probably 6 low-molecular weight proteins. Heme b serves as cofactor.

It is found in the mitochondrion inner membrane. In terms of biological role, component of the ubiquinol-cytochrome c reductase complex (complex III or cytochrome b-c1 complex) that is part of the mitochondrial respiratory chain. The b-c1 complex mediates electron transfer from ubiquinol to cytochrome c. Contributes to the generation of a proton gradient across the mitochondrial membrane that is then used for ATP synthesis. The chain is Cytochrome b (MT-CYB) from Bothrops atrox (Barba amarilla).